Reading from the N-terminus, the 493-residue chain is Phospholipid transfer protein (493 aa).

Residues 1 to 17 (MALFGALFLALLAGAHA) form the signal peptide. N-linked (GlcNAc...) (complex) asparagine glycosylation occurs at N64. N94 carries N-linked (GlcNAc...) asparagine glycosylation. N-linked (GlcNAc...) (complex) asparagine glycosylation occurs at N117. The N-linked (GlcNAc...) asparagine glycan is linked to N143. C146 and C185 are disulfide-bonded. N245 carries N-linked (GlcNAc...) (complex) asparagine glycosylation. N-linked (GlcNAc...) asparagine glycosylation occurs at N398.

The protein belongs to the BPI/LBP/Plunc superfamily. BPI/LBP family. Glycosylation is necessary for secretion and its phospholipid transfer activity. In terms of tissue distribution, widely expressed. Highest level of expression in the ovary, thymus and placenta, with moderate levels found in the pancreas, small intestine, testis, lung and prostrate. Low level expression in the kidney, liver and spleen, with very low levels found in the heart, colon, skeletal muscle, leukocytes and brain. Expressed in the cortical neurons.

It is found in the secreted. The protein resides in the nucleus. The catalysed reaction is a 1,2-diacyl-sn-glycero-3-phosphocholine(in) = a 1,2-diacyl-sn-glycero-3-phosphocholine(out). The enzyme catalyses a 1,2-diacyl-sn-glycero-3-phosphoethanolamine(in) = a 1,2-diacyl-sn-glycero-3-phosphoethanolamine(out). It carries out the reaction a 1,2-diacyl-sn-glycerol(in) = a 1,2-diacyl-sn-glycerol(out). It catalyses the reaction a 1,2-diacyl-sn-glycero-3-phosphate(in) = a 1,2-diacyl-sn-glycero-3-phosphate(out). The catalysed reaction is a sphingomyelin(in) = a sphingomyelin(out). The enzyme catalyses a 1,2-diacyl-sn-glycero-3-phospho-(1'-sn-glycerol)(in) = a 1,2-diacyl-sn-glycero-3-phospho-(1'-sn-glycerol)(out). It carries out the reaction a 1,2-diacyl-sn-glycero-3-phospho-(1D-myo-inositol)(in) = a 1,2-diacyl-sn-glycero-3-phospho-(1D-myo-inositol)(out). It catalyses the reaction 1-hexadecanoyl-2-(5Z,8Z,11Z,14Z-eicosatetraenoyl)-sn-glycero-3-phosphoethanolamine(in) = 1-hexadecanoyl-2-(5Z,8Z,11Z,14Z-eicosatetraenoyl)-sn-glycero-3-phosphoethanolamine(out). The catalysed reaction is N-(hexadecanoyl)-sphing-4-enine-1-phosphocholine(in) = N-(hexadecanoyl)-sphing-4-enine-1-phosphocholine(out). The enzyme catalyses 1,2-dihexadecanoyl-sn-glycero-3-phosphocholine(in) = 1,2-dihexadecanoyl-sn-glycero-3-phosphocholine(out). Mediates the transfer of phospholipids and free cholesterol from triglyceride-rich lipoproteins (low density lipoproteins or LDL and very low density lipoproteins or VLDL) into high-density lipoproteins (HDL) as well as the exchange of phospholipids between triglyceride-rich lipoproteins themselves. Facilitates the transfer of a spectrum of different lipid molecules, including diacylglycerol, phosphatidic acid, sphingomyelin, phosphatidylcholine, phosphatidylinositol, phosphatidylglycerol, cerebroside and phosphatidyl ethanolamine. Plays an important role in HDL remodeling which involves modulating the size and composition of HDL. Also plays a key role in the uptake of cholesterol from peripheral cells and tissues that is subsequently transported to the liver for degradation and excretion. Two distinct forms of PLTP exist in plasma: an active form that can transfer phosphatidylcholine from phospholipid vesicles to HDL, and an inactive form that lacks this capability. The chain is Phospholipid transfer protein (PLTP) from Homo sapiens (Human).